The chain runs to 516 residues: 3-phosphoshikimate 1-carboxyvinyltransferase, chloroplastic (516 aa).

The N-terminal 72 residues, 1–72 (MAQINNMAQG…RISASVATAQ (72 aa)), are a transit peptide targeting the chloroplast. 3-phosphoshikimate-binding residues include Lys95, Ser96, and Arg100. Lys95 is a phosphoenolpyruvate binding site. Residues Gly173 and Arg203 each coordinate phosphoenolpyruvate. Residues Ser250, Ser251, Gln252, Ser278, Asp403, and Lys430 each coordinate 3-phosphoshikimate. Position 252 (Gln252) interacts with phosphoenolpyruvate. The Proton acceptor role is filled by Asp403. Positions 434, 476, and 501 each coordinate phosphoenolpyruvate.

This sequence belongs to the EPSP synthase family. Mostly expressed in flower petals, and, to a lower extent, in roots, stems and anthers, but barely in leaves.

It is found in the plastid. The protein localises to the chloroplast. The catalysed reaction is 3-phosphoshikimate + phosphoenolpyruvate = 5-O-(1-carboxyvinyl)-3-phosphoshikimate + phosphate. Its pathway is metabolic intermediate biosynthesis; chorismate biosynthesis; chorismate from D-erythrose 4-phosphate and phosphoenolpyruvate: step 6/7. Its activity is regulated as follows. Competitively inhibited by glyphosate. Catalyzes the transfer of the enolpyruvyl moiety of phosphoenolpyruvate (PEP) to the 5-hydroxyl of shikimate-3-phosphate (S3P) to produce enolpyruvyl shikimate-3-phosphate and inorganic phosphate. Involved in the accumulation of volatile benzoides in flowers, scent attracting pollinators (e.g. the night-active hawkmoth pollinator Manduca sexta). This Petunia hybrida (Petunia) protein is 3-phosphoshikimate 1-carboxyvinyltransferase, chloroplastic.